The sequence spans 188 residues: Elongation factor P (188 aa).

Belongs to the elongation factor P family.

Its subcellular location is the cytoplasm. The protein operates within protein biosynthesis; polypeptide chain elongation. Involved in peptide bond synthesis. Stimulates efficient translation and peptide-bond synthesis on native or reconstituted 70S ribosomes in vitro. Probably functions indirectly by altering the affinity of the ribosome for aminoacyl-tRNA, thus increasing their reactivity as acceptors for peptidyl transferase. The chain is Elongation factor P from Parabacteroides distasonis (strain ATCC 8503 / DSM 20701 / CIP 104284 / JCM 5825 / NCTC 11152).